Consider the following 425-residue polypeptide: Enolase (425 aa).

Gln-163 is a (2R)-2-phosphoglycerate binding site. Glu-205 functions as the Proton donor in the catalytic mechanism. 3 residues coordinate Mg(2+): Asp-242, Glu-285, and Asp-312. Positions 337, 366, 367, and 388 each coordinate (2R)-2-phosphoglycerate. Lys-337 serves as the catalytic Proton acceptor.

Belongs to the enolase family. Mg(2+) is required as a cofactor.

It is found in the cytoplasm. The protein resides in the secreted. The protein localises to the cell surface. The catalysed reaction is (2R)-2-phosphoglycerate = phosphoenolpyruvate + H2O. Its pathway is carbohydrate degradation; glycolysis; pyruvate from D-glyceraldehyde 3-phosphate: step 4/5. Its function is as follows. Catalyzes the reversible conversion of 2-phosphoglycerate (2-PG) into phosphoenolpyruvate (PEP). It is essential for the degradation of carbohydrates via glycolysis. In Syntrophomonas wolfei subsp. wolfei (strain DSM 2245B / Goettingen), this protein is Enolase.